The chain runs to 508 residues: Light-independent protochlorophyllide reductase subunit B (508 aa).

Residue aspartate 36 participates in [4Fe-4S] cluster binding. Residue aspartate 294 is the Proton donor of the active site. Position 429–430 (glycine 429–methionine 430) interacts with substrate.

It belongs to the ChlB/BchB/BchZ family. As to quaternary structure, protochlorophyllide reductase is composed of three subunits; ChlL, ChlN and ChlB. Forms a heterotetramer of two ChlB and two ChlN subunits. The cofactor is [4Fe-4S] cluster.

It catalyses the reaction chlorophyllide a + oxidized 2[4Fe-4S]-[ferredoxin] + 2 ADP + 2 phosphate = protochlorophyllide a + reduced 2[4Fe-4S]-[ferredoxin] + 2 ATP + 2 H2O. The protein operates within porphyrin-containing compound metabolism; chlorophyll biosynthesis (light-independent). In terms of biological role, component of the dark-operative protochlorophyllide reductase (DPOR) that uses Mg-ATP and reduced ferredoxin to reduce ring D of protochlorophyllide (Pchlide) to form chlorophyllide a (Chlide). This reaction is light-independent. The NB-protein (ChlN-ChlB) is the catalytic component of the complex. The polypeptide is Light-independent protochlorophyllide reductase subunit B (Nostoc punctiforme (strain ATCC 29133 / PCC 73102)).